Here is a 253-residue protein sequence, read N- to C-terminus: Phosphate import ATP-binding protein PstB (253 aa).

In terms of domain architecture, ABC transporter spans 5–248; it reads IETVNLNVYY…PEHELTEKYV (244 aa). Residue 37–44 participates in ATP binding; it reads GPSGCGKS.

Belongs to the ABC transporter superfamily. Phosphate importer (TC 3.A.1.7) family. In terms of assembly, the complex is composed of two ATP-binding proteins (PstB), two transmembrane proteins (PstC and PstA) and a solute-binding protein (PstS).

It is found in the cell membrane. It catalyses the reaction phosphate(out) + ATP + H2O = ADP + 2 phosphate(in) + H(+). Its function is as follows. Part of the ABC transporter complex PstSACB involved in phosphate import. Responsible for energy coupling to the transport system. The sequence is that of Phosphate import ATP-binding protein PstB from Thermococcus kodakarensis (strain ATCC BAA-918 / JCM 12380 / KOD1) (Pyrococcus kodakaraensis (strain KOD1)).